A 445-amino-acid polypeptide reads, in one-letter code: Probable D-serine dehydratase (445 aa).

Lysine 111 carries the N6-(pyridoxal phosphate)lysine modification.

This sequence belongs to the serine/threonine dehydratase family. DsdA subfamily. Requires pyridoxal 5'-phosphate as cofactor.

It carries out the reaction D-serine = pyruvate + NH4(+). The chain is Probable D-serine dehydratase from Burkholderia pseudomallei (strain 1710b).